A 382-amino-acid chain; its full sequence is Beta-1,4-galactosyltransferase 6 (382 aa).

Residues 1–15 (MSALKRMMRVSNRSL) are Cytoplasmic-facing. Residues 16–35 (IAFIFFFSLSTSCLYFIYVA) form a helical; Signal-anchor for type II membrane protein membrane-spanning segment. Topologically, residues 36–382 (PGIANTYLFM…MPELAPIEDY (347 aa)) are lumenal. 6 N-linked (GlcNAc...) asparagine glycosylation sites follow: Asn-71, Asn-75, Asn-83, Asn-84, Asn-99, and Asn-122. A disulfide bridge links Cys-108 with Cys-152. Residues 163-167 (PFRNR), 202-204 (FNR), 229-230 (VD), Tyr-258, and Trp-290 contribute to the UDP-alpha-D-galactose site. Cysteines 223 and 242 form a disulfide. Asp-230 contacts Mn(2+). 292 to 295 (GEDD) provides a ligand contact to N-acetyl-D-glucosamine. Asn-307 is a glycosylation site (N-linked (GlcNAc...) asparagine). Mn(2+) is bound at residue His-323. 323-324 (HH) provides a ligand contact to UDP-alpha-D-galactose. Arg-334 contacts N-acetyl-D-glucosamine. N-linked (GlcNAc...) asparagine glycosylation is present at Asn-367.

This sequence belongs to the glycosyltransferase 7 family. The cofactor is Mn(2+). Requires Mg(2+) as cofactor. Ca(2+) serves as cofactor. Brain and kidney.

The protein localises to the golgi apparatus. It is found in the golgi stack membrane. The catalysed reaction is a beta-D-glucosyl-(1&lt;-&gt;1')-N-acylsphing-4-enine + UDP-alpha-D-galactose = a beta-D-Gal-(1-&gt;4)-beta-D-Glc-(1&lt;-&gt;1)-Cer(d18:1(4E)) + UDP + H(+). It participates in protein modification; protein glycosylation. It functions in the pathway sphingolipid metabolism. Its activity is regulated as follows. Inhibited by EDTA. Functionally, catalyzes the synthesis of lactosylceramide (LacCer) via the transfer of galactose from UDP-galactose to glucosylceramide (GlcCer). LacCer is the starting point in the biosynthesis of all gangliosides (membrane-bound glycosphingolipids) which play pivotal roles in the CNS including neuronal maturation and axonal and myelin formation. In Mus musculus (Mouse), this protein is Beta-1,4-galactosyltransferase 6.